The sequence spans 805 residues: Transcription factor SFL1 (805 aa).

Positions 1–24 (MSHLVSSSLGTTTTATPTSRSPHT) are enriched in low complexity. The disordered stretch occupies residues 1–110 (MSHLVSSSLG…NNNVSNNNST (110 aa)). Positions 25–69 (NHSTPYNQNSITSNRSSPVPKNSVNSRIIPQTMNPPIDMKSNNIL) are enriched in polar residues. Residues 71 to 85 (PEKDTDTSRGDHSES) are compositionally biased toward basic and acidic residues. Residues 86–110 (KASSISSASGTTTTNNNNVSNNNST) are compositionally biased toward low complexity. A DNA-binding region spans residues 117-226 (FIHKLYDMLH…LKNIKRRSSK (110 aa)). 5 disordered regions span residues 273–336 (MQSP…NQSP), 438–483 (QSNF…VAPQ), 513–675 (REDS…PAPQ), 691–746 (HQKS…SENH), and 759–805 (VSEL…RKLE). The span at 295 to 310 (QQQQQQQQQQQQQQQQ) shows a compositional bias: low complexity. Polar residues-rich tracts occupy residues 454–480 (HGNS…NLNV) and 533–556 (PSRN…NFNP). The span at 557–566 (QQSQSQSQVQ) shows a compositional bias: low complexity. Polar residues-rich tracts occupy residues 581–597 (ESTY…SQIL), 604–614 (VNHSPLVQQQQ), and 622–635 (NDSS…SSLP). Positions 637-659 (TRPLSRQQQQQQQTLHHPSTTSS) are enriched in low complexity. Over residues 716–738 (PISSTAPTTMITSTSKPTSTSGA) the composition is skewed to polar residues.

This sequence belongs to the HSF family.

The protein localises to the nucleus. In terms of biological role, transcription factor that plays a role of repressor of filamentous growth and flocculation. Antagonizes functions of SFL2 and FLO8. Plays a role in the hyphal repression induced by secreted factors like dodecanol by competitors such as Pseudomonas aeruginosa and Burkholderia cenocepacia. This Candida albicans (strain SC5314 / ATCC MYA-2876) (Yeast) protein is Transcription factor SFL1 (SFL1).